The chain runs to 214 residues: C-type lectin domain family 4 member E (214 aa).

Topologically, residues Met1–Val22 are cytoplasmic. The helical; Signal-anchor for type II membrane protein transmembrane segment at Leu23–Val45 threads the bilayer. At Thr46–Asp214 the chain is on the extracellular side. A disulfide bridge links Cys80 with Cys91. In terms of domain architecture, C-type lectin spans Tyr87–Glu206. N-linked (GlcNAc...) asparagine glycosylation is present at Asn107. Disulfide bonds link Cys108–Cys205 and Cys179–Cys197. Positions 117, 123, 169, 171, 193, 194, and 206 each coordinate Ca(2+). Residues Glu169–Asn171 carry the Confers specificity for glucose/mannose-type carbohydrates motif.

In terms of assembly, monomer and homodimer. Interacts with signaling adapter Fc receptor gamma chain/FCER1G to form a functional complex; the interaction is direct. Alternatively, acts as a bridge for interaction between CLEC4D and FCER1G. A heterodimer of CLEC4E and CLEC4D associates with FCER1G to form a functional complex. Interacts with SAP130 nuclear protein that is released from necrotic cells; the interaction is direct. Highly expressed in macrophages in response to stimulation with bacterial glycolipids and pro-inflammatory cytokines. Expressed in dendritic cells (at protein level) in response to stimulation with mycobacterial trehalose 6,6'-dimycolate (TDM).

It localises to the cell membrane. Its subcellular location is the cell projection. The protein localises to the phagocytic cup. Its function is as follows. Calcium-dependent lectin that acts as a pattern recognition receptor (PRR) of the innate immune system: recognizes damage-associated molecular patterns (DAMPs) of abnormal self and pathogen-associated molecular patterns (PAMPs) of bacteria and fungi. The PAMPs notably include mycobacterial trehalose 6,6'-dimycolate (TDM), a cell wall glycolipid with potent adjuvant immunomodulatory functions. Interacts with signaling adapter Fc receptor gamma chain/FCER1G to form a functional complex in myeloid cells. Binding of mycobacterial trehalose 6,6'-dimycolate (TDM) to this receptor complex leads to phosphorylation of the immunoreceptor tyrosine-based activation motif (ITAM) of FCER1G, triggering activation of SYK, CARD9 and NF-kappa-B, consequently driving maturation of antigen-presenting cells and shaping antigen-specific priming of T-cells toward effector T-helper 1 (Th1) and T-helper 17 (Th17) cell subtypes. Also recognizes alpha-mannose residues on pathogenic fungi of the genus Malassezia and mediates macrophage activation. Through recognition of DAMPs released upon nonhomeostatic cell death, enables immune sensing of damaged self and promotes inflammatory cell infiltration into the damaged tissue. This Mus musculus (Mouse) protein is C-type lectin domain family 4 member E.